We begin with the raw amino-acid sequence, 747 residues long: Myotubularin-related protein 12 (747 aa).

Residues 1–14 (MLGKGVVGGGGGTK) show a composition bias toward gly residues. A disordered region spans residues 1–21 (MLGKGVVGGGGGTKGPKPSFV). Residues 205–643 (FDTLKDWCWE…PEIKVWAQRY (439 aa)) form the Myotubularin phosphatase domain. The segment at 449 to 558 (VPVFLLFLDC…KGQRKGMRFK (110 aa)) is interaction with MTM1. Phosphoserine is present on residues serine 564, serine 601, and serine 716.

The protein belongs to the protein-tyrosine phosphatase family. Non-receptor class myotubularin subfamily. Heterodimer with lipid phosphatase MTM1. Heterodimer with lipid phosphatase MTMR2.

Its subcellular location is the cytoplasm. It is found in the sarcoplasmic reticulum. The protein localises to the myofibril. The protein resides in the sarcomere. In terms of biological role, acts as an adapter for the myotubularin-related phosphatases. Regulates phosphatase MTM1 protein stability and possibly its intracellular location. By stabilizing MTM1 protein levels, required for skeletal muscle maintenance but not for myogenesis. In Pongo abelii (Sumatran orangutan), this protein is Myotubularin-related protein 12 (MTMR12).